Reading from the N-terminus, the 492-residue chain is Ketol-acid reductoisomerase (NADP(+)) (492 aa).

The region spanning 17–208 is the KARI N-terminal Rossmann domain; sequence LGVCEFMDRS…GGDRAGVLKS (192 aa). NADP(+) is bound by residues 45 to 48, R68, R76, S78, and 108 to 110; these read CGAQ and DKQ. H132 is an active-site residue. G158 serves as a coordination point for NADP(+). 2 KARI C-terminal knotted domains span residues 209 to 353 and 354 to 487; these read SFVA…AEQE and YYDN…MTEM. D217, E221, E389, and E393 together coordinate Mg(2+). S414 serves as a coordination point for substrate.

Belongs to the ketol-acid reductoisomerase family. It depends on Mg(2+) as a cofactor.

The catalysed reaction is (2R)-2,3-dihydroxy-3-methylbutanoate + NADP(+) = (2S)-2-acetolactate + NADPH + H(+). The enzyme catalyses (2R,3R)-2,3-dihydroxy-3-methylpentanoate + NADP(+) = (S)-2-ethyl-2-hydroxy-3-oxobutanoate + NADPH + H(+). It participates in amino-acid biosynthesis; L-isoleucine biosynthesis; L-isoleucine from 2-oxobutanoate: step 2/4. It functions in the pathway amino-acid biosynthesis; L-valine biosynthesis; L-valine from pyruvate: step 2/4. In terms of biological role, involved in the biosynthesis of branched-chain amino acids (BCAA). Catalyzes an alkyl-migration followed by a ketol-acid reduction of (S)-2-acetolactate (S2AL) to yield (R)-2,3-dihydroxy-isovalerate. In the isomerase reaction, S2AL is rearranged via a Mg-dependent methyl migration to produce 3-hydroxy-3-methyl-2-ketobutyrate (HMKB). In the reductase reaction, this 2-ketoacid undergoes a metal-dependent reduction by NADPH to yield (R)-2,3-dihydroxy-isovalerate. This chain is Ketol-acid reductoisomerase (NADP(+)), found in Cytophaga hutchinsonii (strain ATCC 33406 / DSM 1761 / CIP 103989 / NBRC 15051 / NCIMB 9469 / D465).